Reading from the N-terminus, the 74-residue chain is uncharacterized protein (74 aa).

This is an uncharacterized protein from Invertebrate iridescent virus 6 (IIV-6).